The following is a 769-amino-acid chain: Bifunctional glycosyltransferase pgtA (769 aa).

The N-acetylgalactosamine 3-beta-galactosyltransferase stretch occupies residues 25-210 (YQGINNLIIS…SVIFKRSIFT (186 aa)). Low complexity predominate over residues 410–441 (NNINNNNNNNNNNNNNNNNNNNNNNNNNNNNN). The tract at residues 410-442 (NNINNNNNNNNNNNNNNNNNNNNNNNNNNNNNS) is disordered. Positions 442 to 769 (SILNFISGIN…SVHIGELFIS (328 aa)) are alpha-1,2-fucosyltransferase.

This sequence belongs to the glycosyltransferase 2 family.

The enzyme catalyses an N-acetyl-beta-D-glucosaminyl derivative + UDP-alpha-D-galactose = a beta-D-galactosyl-(1-&gt;3)-N-acetyl-beta-D-glucosaminyl derivative + UDP + H(+). It catalyses the reaction a beta-D-galactosyl-(1-&gt;3)-N-acetyl-beta-D-glucosaminyl derivative + GDP-beta-L-fucose = an alpha-L-Fuc-(1-&gt;2)-beta-D-Gal-(1-&gt;3)-beta-D-GlcNAc derivative + GDP + H(+). Bifunctional protein composed of 2 glycosyltransferase domains involved in glycosylating skp1. The N-terminal part catalyzes the transfer of a galactose residue to GlcNAc-skp1 in a beta 1-3 linkage. The C-terminal part catalyzes the transfer of a fucose residue to Gal-GlcNAc-skp1 in an alpha 1-2 linkage. The polypeptide is Bifunctional glycosyltransferase pgtA (pgtA) (Dictyostelium discoideum (Social amoeba)).